Here is a 186-residue protein sequence, read N- to C-terminus: uncharacterized protein (186 aa).

This is an uncharacterized protein from Saccharomyces cerevisiae (strain ATCC 204508 / S288c) (Baker's yeast).